A 120-amino-acid chain; its full sequence is Aspartate 1-decarboxylase (120 aa).

Ser-25 functions as the Schiff-base intermediate with substrate; via pyruvic acid in the catalytic mechanism. Pyruvic acid (Ser) is present on Ser-25. Thr-57 serves as a coordination point for substrate. The Proton donor role is filled by Tyr-58. Substrate is bound at residue 73–75 (GAA).

Belongs to the PanD family. As to quaternary structure, heterooctamer of four alpha and four beta subunits. Pyruvate serves as cofactor. Is synthesized initially as an inactive proenzyme, which is activated by self-cleavage at a specific serine bond to produce a beta-subunit with a hydroxyl group at its C-terminus and an alpha-subunit with a pyruvoyl group at its N-terminus.

It localises to the cytoplasm. The enzyme catalyses L-aspartate + H(+) = beta-alanine + CO2. The protein operates within cofactor biosynthesis; (R)-pantothenate biosynthesis; beta-alanine from L-aspartate: step 1/1. Catalyzes the pyruvoyl-dependent decarboxylation of aspartate to produce beta-alanine. The chain is Aspartate 1-decarboxylase from Cupriavidus necator (strain ATCC 17699 / DSM 428 / KCTC 22496 / NCIMB 10442 / H16 / Stanier 337) (Ralstonia eutropha).